Consider the following 362-residue polypeptide: Histidinol-phosphate aminotransferase (362 aa).

An N6-(pyridoxal phosphate)lysine modification is found at lysine 218.

It belongs to the class-II pyridoxal-phosphate-dependent aminotransferase family. Histidinol-phosphate aminotransferase subfamily. Homodimer. Pyridoxal 5'-phosphate serves as cofactor.

It carries out the reaction L-histidinol phosphate + 2-oxoglutarate = 3-(imidazol-4-yl)-2-oxopropyl phosphate + L-glutamate. Its pathway is amino-acid biosynthesis; L-histidine biosynthesis; L-histidine from 5-phospho-alpha-D-ribose 1-diphosphate: step 7/9. The chain is Histidinol-phosphate aminotransferase from Ruegeria sp. (strain TM1040) (Silicibacter sp.).